We begin with the raw amino-acid sequence, 86 residues long: High affinity immunoglobulin epsilon receptor subunit gamma (86 aa).

Residues 1–18 (MISAVILFLLLLVEQAAA) form the signal peptide. The Extracellular segment spans residues 19-23 (LGEPQ). Residues 24-44 (LCYILDAVLFLYGIVLTLLYC) form a helical membrane-spanning segment. The Cytoplasmic portion of the chain corresponds to 45–86 (RLKIQVRKAAIASREKADAVYTGLNTRSQETYETLKHEKPPQ). In terms of domain architecture, ITAM spans 54–82 (AIASREKADAVYTGLNTRSQETYETLKHE). A phosphotyrosine mark is found at tyrosine 65 and tyrosine 76. Position 78 is a phosphothreonine (threonine 78).

It belongs to the CD3Z/FCER1G family. As to quaternary structure, igE Fc receptor is a tetramer of an alpha chain, a beta chain, and two disulfide linked gamma chains. Associates with FCGR1A; forms a functional signaling complex. The signaling subunit of immunoglobulin gamma (IgG) Fc receptor complex. As a homodimer or a heterodimer of CD247 and FCER1G, associates with the ligand binding subunit FCGR3A to form a functional receptor complex. Associates with CLEC6A. Interacts with CLEC4E. Interacts (via ITAM domain) with SYK (via SH2 domains); activates SYK, enabling integrin-mediated activation of neutrophils and macrophages. Interacts with CSF2RB and recruits SYK in response to IL3 stimulation; this interaction is direct. Interacts with CD300LH; the interaction may be indirect. Interacts with CD300LD. Interacts with TARM1. As to expression, expressed in mast cells (at protein level). Expressed in basophils (at protein level).

Its subcellular location is the cell membrane. Adapter protein containing an immunoreceptor tyrosine-based activation motif (ITAM) that transduces activation signals from various immunoreceptors. As a component of the high-affinity immunoglobulin E (IgE) receptor, mediates allergic inflammatory signaling in mast cells. As a constitutive component of interleukin-3 receptor complex, selectively mediates interleukin 4/IL4 production by basophils, priming T-cells toward effector T-helper 2 subset. Associates with pattern recognition receptors CLEC4D and CLEC4E to form a functional signaling complex in myeloid cells. Binding of mycobacterial trehalose 6,6'-dimycolate (TDM) to this receptor complex leads to phosphorylation of ITAM, triggering activation of SYK, CARD9 and NF-kappa-B, consequently driving maturation of antigen-presenting cells and shaping antigen-specific priming of T-cells toward effector T-helper 1 and T-helper 17 cell subtypes. May function cooperatively with other activating receptors. Functionally linked to integrin beta-2/ITGB2-mediated neutrophil activation. Also involved in integrin alpha-2/ITGA2-mediated platelet activation. This is High affinity immunoglobulin epsilon receptor subunit gamma from Mus musculus (Mouse).